The following is a 489-amino-acid chain: Acetyl-coenzyme A carboxylase carboxyl transferase subunit beta, chloroplastic (489 aa).

Residues 225-489 (LWIQCDNCYG…FFPLNKNEIK (265 aa)) enclose the CoA carboxyltransferase N-terminal domain. Cysteine 229, cysteine 232, cysteine 245, and cysteine 248 together coordinate Zn(2+). The C4-type zinc-finger motif lies at 229 to 248 (CDNCYGLKYKKVEMNVCEEC).

The protein belongs to the AccD/PCCB family. In terms of assembly, acetyl-CoA carboxylase is a heterohexamer composed of biotin carboxyl carrier protein, biotin carboxylase and 2 subunits each of ACCase subunit alpha and ACCase plastid-coded subunit beta (accD). The cofactor is Zn(2+).

It is found in the plastid. It localises to the chloroplast stroma. The catalysed reaction is N(6)-carboxybiotinyl-L-lysyl-[protein] + acetyl-CoA = N(6)-biotinyl-L-lysyl-[protein] + malonyl-CoA. It functions in the pathway lipid metabolism; malonyl-CoA biosynthesis; malonyl-CoA from acetyl-CoA: step 1/1. In terms of biological role, component of the acetyl coenzyme A carboxylase (ACC) complex. Biotin carboxylase (BC) catalyzes the carboxylation of biotin on its carrier protein (BCCP) and then the CO(2) group is transferred by the transcarboxylase to acetyl-CoA to form malonyl-CoA. This chain is Acetyl-coenzyme A carboxylase carboxyl transferase subunit beta, chloroplastic, found in Brassica napus (Rape).